The sequence spans 33 residues: MSDIN-like toxin proprotein 6 (33 aa).

Positions 1–10 (MSDINATRLP) are excised as a propeptide. A cross-link (cyclopeptide (Leu-Pro)) is located at residues 11 to 20 (LILLAALGIP). Residues 21–33 (SDDADSTLTRGER) constitute a propeptide that is removed on maturation.

This sequence belongs to the MSDIN fungal toxin family. Post-translationally, processed by the macrocyclase-peptidase enzyme POPB to yield a toxic cyclic decapeptide. POPB first removes 10 residues from the N-terminus. Conformational trapping of the remaining peptide forces the enzyme to release this intermediate rather than proceed to macrocyclization. The enzyme rebinds the remaining peptide in a different conformation and catalyzes macrocyclization of the N-terminal 10 residues.

In terms of biological role, probable toxin that belongs to the MSDIN-like toxin family responsible for a large number of food poisoning cases and deaths. The protein is MSDIN-like toxin proprotein 6 of Amanita phalloides (Death cap).